The sequence spans 73 residues: Protein SlyX homolog (73 aa).

Belongs to the SlyX family.

This is Protein SlyX homolog from Actinobacillus pleuropneumoniae serotype 5b (strain L20).